A 157-amino-acid chain; its full sequence is 2-C-methyl-D-erythritol 2,4-cyclodiphosphate synthase (157 aa).

A divalent metal cation is bound by residues aspartate 9 and histidine 11. 4-CDP-2-C-methyl-D-erythritol 2-phosphate contacts are provided by residues 9–11 and 35–36; these read DVH and HS. Residue histidine 43 coordinates a divalent metal cation. Residues 57-59, 62-66, 101-107, 133-136, phenylalanine 140, and arginine 143 each bind 4-CDP-2-C-methyl-D-erythritol 2-phosphate; these read DIG, FPDTD, AEKPKMA, and TTTE.

Belongs to the IspF family. Homotrimer. A divalent metal cation serves as cofactor.

The enzyme catalyses 4-CDP-2-C-methyl-D-erythritol 2-phosphate = 2-C-methyl-D-erythritol 2,4-cyclic diphosphate + CMP. It functions in the pathway isoprenoid biosynthesis; isopentenyl diphosphate biosynthesis via DXP pathway; isopentenyl diphosphate from 1-deoxy-D-xylulose 5-phosphate: step 4/6. Functionally, involved in the biosynthesis of isopentenyl diphosphate (IPP) and dimethylallyl diphosphate (DMAPP), two major building blocks of isoprenoid compounds. Catalyzes the conversion of 4-diphosphocytidyl-2-C-methyl-D-erythritol 2-phosphate (CDP-ME2P) to 2-C-methyl-D-erythritol 2,4-cyclodiphosphate (ME-CPP) with a corresponding release of cytidine 5-monophosphate (CMP). The polypeptide is 2-C-methyl-D-erythritol 2,4-cyclodiphosphate synthase (Listeria innocua serovar 6a (strain ATCC BAA-680 / CLIP 11262)).